The sequence spans 345 residues: Protein TRIGALACTOSYLDIACYLGLYCEROL 3, chloroplastic (345 aa).

The transit peptide at 1 to 46 directs the protein to the chloroplast; sequence MLSLSCSSSSSSLLPPSLHYHGSSSVQSIVVPRRSLISFRRKVSCC. The ABC transporter domain maps to 85–336; the sequence is IECRDVYKSF…TNPIVQQFAT (252 aa). 117-124 is an ATP binding site; it reads GPSGTGKS.

The protein belongs to the ABC transporter superfamily. ABCI family. In terms of assembly, catalytic subunit of the TGD complex, a lipid translocator at the inner chloroplast envelope membrane made of TGD1, TGD2 and TGD3. Interacts with TGD1 and TGD2 with an overall subunit stoichiometry of 2 TGD1, 2 TGD3 and 8 to 12 TGD2. Interacts with TGD5.

Its subcellular location is the plastid. The protein localises to the chloroplast stroma. Functionally, ATPase transporter involved in lipid transfer from the endoplasmic reticulum (ER) to plastids, and necessary for thylakoids formation. Not involved in transition metal transport pathways. This is Protein TRIGALACTOSYLDIACYLGLYCEROL 3, chloroplastic from Arabidopsis thaliana (Mouse-ear cress).